The sequence spans 241 residues: Probable septum site-determining protein MinC (241 aa).

The protein belongs to the MinC family. As to quaternary structure, interacts with MinD and FtsZ.

In terms of biological role, cell division inhibitor that blocks the formation of polar Z ring septums. Rapidly oscillates between the poles of the cell to destabilize FtsZ filaments that have formed before they mature into polar Z rings. Prevents FtsZ polymerization. This Rhizobium rhizogenes (strain K84 / ATCC BAA-868) (Agrobacterium radiobacter) protein is Probable septum site-determining protein MinC.